A 174-amino-acid polypeptide reads, in one-letter code: Co-chaperone protein HscB homolog (174 aa).

Residues 2 to 74 form the J domain; the sequence is NYFELFKFSP…IRRAEHLLSL (73 aa).

This sequence belongs to the HscB family. In terms of assembly, interacts with HscA and stimulates its ATPase activity.

Functionally, co-chaperone involved in the maturation of iron-sulfur cluster-containing proteins. Seems to help targeting proteins to be folded toward HscA. This Shewanella sp. (strain W3-18-1) protein is Co-chaperone protein HscB homolog.